We begin with the raw amino-acid sequence, 463 residues long: 23S rRNA (uracil(1939)-C(5))-methyltransferase RlmD (463 aa).

Positions 14–78 (AVAPGSDPVV…PSYEQAHLLE (65 aa)) constitute a TRAM domain. Positions 91, 97, 100, and 179 each coordinate [4Fe-4S] cluster. Positions 287, 316, 321, 337, 365, and 386 each coordinate S-adenosyl-L-methionine. Cysteine 419 serves as the catalytic Nucleophile.

The protein belongs to the class I-like SAM-binding methyltransferase superfamily. RNA M5U methyltransferase family. RlmD subfamily.

It carries out the reaction uridine(1939) in 23S rRNA + S-adenosyl-L-methionine = 5-methyluridine(1939) in 23S rRNA + S-adenosyl-L-homocysteine + H(+). Its function is as follows. Catalyzes the formation of 5-methyl-uridine at position 1939 (m5U1939) in 23S rRNA. This is 23S rRNA (uracil(1939)-C(5))-methyltransferase RlmD from Cupriavidus pinatubonensis (strain JMP 134 / LMG 1197) (Cupriavidus necator (strain JMP 134)).